Consider the following 74-residue polypeptide: Mu-conotoxin-like T3.1 (74 aa).

A signal peptide spans 1–19 (MSKLGVLLTICLLLFPLTA). Positions 20 to 74 (LPMDGDEPADRPAERMQDNISSEQHPLFEERHGCCKGPEGCSSRECRPQHCCGRR) are excised as a propeptide. 3 cysteine pairs are disulfide-bonded: Cys53/Cys65, Cys54/Cys70, and Cys60/Cys71. Pro57 bears the 4-hydroxyproline mark. Residues Glu58 and Glu64 each carry the 4-carboxyglutamate modification. Position 67 is a 4-hydroxyproline (Pro67). At Cys71 the chain carries Cysteine amide.

The protein belongs to the conotoxin M superfamily. As to expression, expressed by the venom duct.

It localises to the secreted. In terms of biological role, mu-conotoxins block voltage-gated sodium channels (Nav). In vitro, this synthetic peptide displays a low blocking effect in mouse extensor digitorum longus muscles (IC(50)=616 nM). This is Mu-conotoxin-like T3.1 from Conus tulipa (Fish-hunting cone snail).